Here is a 181-residue protein sequence, read N- to C-terminus: MDHQTAEALRAFTQRYCAVWQQQRHSLPRSEELYGVPSPCVVDTQGEAVFWQPQPFSLAQNISAVERALDIVVQQPLHSYYTTQFAGDMSGRFAGETLTLLQTWSEEDFQRVQENLIGHLVVQKRLKLSPTLFIATLESELDVISVCNLSGEVVKETLGTAKRITLSPSLAGFLNHLEPVL.

The protein belongs to the Syd family.

It is found in the cell inner membrane. Its function is as follows. Interacts with the SecY protein in vivo. May bind preferentially to an uncomplexed state of SecY, thus functioning either as a chelating agent for excess SecY in the cell or as a regulatory factor that negatively controls the translocase function. The polypeptide is Protein Syd (Klebsiella pneumoniae subsp. pneumoniae (strain ATCC 700721 / MGH 78578)).